The sequence spans 317 residues: NADH kinase (317 aa).

This sequence belongs to the NAD kinase family. Homodimer. In terms of tissue distribution, ubiquitous.

The protein localises to the cytoplasm. The enzyme catalyses NADH + ATP = ADP + NADPH + H(+). Two-fold decrease in activity in the presence of PPi, iodoacetate or para-chloromercuribenzoate. Functionally, phosphorylates specifically NADH. Can phosphorylate NAD with a 100-fold decrease in efficiency compared to NADH. Prefers ATP as nucleoside triphosphate substrate. Can also utilize UTP, GTP and CTP. Key source of the cellular reductant NADPH which is an important antioxidant factor. This chain is NADH kinase (NADK3), found in Arabidopsis thaliana (Mouse-ear cress).